Reading from the N-terminus, the 206-residue chain is Small ribosomal subunit protein uS4 (206 aa).

Residues 96–156 enclose the S4 RNA-binding domain; sequence GRLDNVVYRM…EKAKKQARIK (61 aa).

This sequence belongs to the universal ribosomal protein uS4 family. Part of the 30S ribosomal subunit. Contacts protein S5. The interaction surface between S4 and S5 is involved in control of translational fidelity.

One of the primary rRNA binding proteins, it binds directly to 16S rRNA where it nucleates assembly of the body of the 30S subunit. Functionally, with S5 and S12 plays an important role in translational accuracy. This chain is Small ribosomal subunit protein uS4, found in Aeromonas salmonicida (strain A449).